The following is a 495-amino-acid chain: ATP synthase subunit beta, chloroplastic (495 aa).

172 to 179 contacts ATP; the sequence is GGAGVGKT.

The protein belongs to the ATPase alpha/beta chains family. F-type ATPases have 2 components, CF(1) - the catalytic core - and CF(0) - the membrane proton channel. CF(1) has five subunits: alpha(3), beta(3), gamma(1), delta(1), epsilon(1). CF(0) has four main subunits: a(1), b(1), b'(1) and c(9-12).

It localises to the plastid. The protein localises to the chloroplast thylakoid membrane. The catalysed reaction is ATP + H2O + 4 H(+)(in) = ADP + phosphate + 5 H(+)(out). Functionally, produces ATP from ADP in the presence of a proton gradient across the membrane. The catalytic sites are hosted primarily by the beta subunits. The polypeptide is ATP synthase subunit beta, chloroplastic (Eucomis bicolor (King's flower)).